The following is a 250-amino-acid chain: Ubiquitin-conjugating enzyme E2 6 (250 aa).

Residues 1 to 232 (MATKQAHKRL…DGKEPNDSSS (232 aa)) lie on the Cytoplasmic side of the membrane. A UBC core domain is found at 5 to 167 (QAHKRLTKEY…VQENVETLEK (163 aa)). Catalysis depends on Cys-87, which acts as the Glycyl thioester intermediate. Ser-139 is modified (phosphoserine). Thr-178 bears the Phosphothreonine mark. The interval 209–229 (AEQALRQSENNSKKDGKEPND) is disordered. Positions 219–228 (NSKKDGKEPN) are enriched in basic and acidic residues. The chain crosses the membrane as a helical span at residues 233-249 (MVYIGIAIFLFLVGLFM).

This sequence belongs to the ubiquitin-conjugating enzyme family.

It is found in the endoplasmic reticulum membrane. The catalysed reaction is S-ubiquitinyl-[E1 ubiquitin-activating enzyme]-L-cysteine + [E2 ubiquitin-conjugating enzyme]-L-cysteine = [E1 ubiquitin-activating enzyme]-L-cysteine + S-ubiquitinyl-[E2 ubiquitin-conjugating enzyme]-L-cysteine.. It functions in the pathway protein modification; protein ubiquitination. Functionally, catalyzes the covalent attachment of ubiquitin to other proteins. Functions in degradation of misfolded or regulated proteins localized in the endoplasmic reticulum (ER) lumen or membrane via the ubiquitin-proteasome system. Cognate E2 conjugating enzyme for the DOA10 ubiquitin ligase complex, which is part of the ERAD-C pathway responsible for the rapid degradation of membrane proteins with misfolded cytoplasmic domains. This chain is Ubiquitin-conjugating enzyme E2 6 (UBC6), found in Saccharomyces cerevisiae (strain ATCC 204508 / S288c) (Baker's yeast).